The chain runs to 88 residues: Small ribosomal subunit protein uS15 (88 aa).

This sequence belongs to the universal ribosomal protein uS15 family. Part of the 30S ribosomal subunit. Forms a bridge to the 50S subunit in the 70S ribosome, contacting the 23S rRNA.

One of the primary rRNA binding proteins, it binds directly to 16S rRNA where it helps nucleate assembly of the platform of the 30S subunit by binding and bridging several RNA helices of the 16S rRNA. Functionally, forms an intersubunit bridge (bridge B4) with the 23S rRNA of the 50S subunit in the ribosome. This is Small ribosomal subunit protein uS15 from Mesoplasma florum (strain ATCC 33453 / NBRC 100688 / NCTC 11704 / L1) (Acholeplasma florum).